A 245-amino-acid polypeptide reads, in one-letter code: 1-(5-phosphoribosyl)-5-[(5-phosphoribosylamino)methylideneamino] imidazole-4-carboxamide isomerase (245 aa).

Catalysis depends on aspartate 7, which acts as the Proton acceptor. The active-site Proton donor is aspartate 129.

It belongs to the HisA/HisF family.

It is found in the cytoplasm. It carries out the reaction 1-(5-phospho-beta-D-ribosyl)-5-[(5-phospho-beta-D-ribosylamino)methylideneamino]imidazole-4-carboxamide = 5-[(5-phospho-1-deoxy-D-ribulos-1-ylimino)methylamino]-1-(5-phospho-beta-D-ribosyl)imidazole-4-carboxamide. It participates in amino-acid biosynthesis; L-histidine biosynthesis; L-histidine from 5-phospho-alpha-D-ribose 1-diphosphate: step 4/9. In Salmonella choleraesuis (strain SC-B67), this protein is 1-(5-phosphoribosyl)-5-[(5-phosphoribosylamino)methylideneamino] imidazole-4-carboxamide isomerase.